A 485-amino-acid polypeptide reads, in one-letter code: Glutamyl-tRNA(Gln) amidotransferase subunit A (485 aa).

Catalysis depends on charge relay system residues K79 and S154. Residue S178 is the Acyl-ester intermediate of the active site.

Belongs to the amidase family. GatA subfamily. In terms of assembly, heterotrimer of A, B and C subunits.

The enzyme catalyses L-glutamyl-tRNA(Gln) + L-glutamine + ATP + H2O = L-glutaminyl-tRNA(Gln) + L-glutamate + ADP + phosphate + H(+). Functionally, allows the formation of correctly charged Gln-tRNA(Gln) through the transamidation of misacylated Glu-tRNA(Gln) in organisms which lack glutaminyl-tRNA synthetase. The reaction takes place in the presence of glutamine and ATP through an activated gamma-phospho-Glu-tRNA(Gln). In Staphylococcus saprophyticus subsp. saprophyticus (strain ATCC 15305 / DSM 20229 / NCIMB 8711 / NCTC 7292 / S-41), this protein is Glutamyl-tRNA(Gln) amidotransferase subunit A.